Here is a 476-residue protein sequence, read N- to C-terminus: Bifunctional protein HldE (476 aa).

The segment at methionine 1–threonine 318 is ribokinase. Residue asparagine 195–glutamate 198 coordinates ATP. Residue aspartate 264 is part of the active site. Residues methionine 344–glutamine 476 are cytidylyltransferase.

It in the N-terminal section; belongs to the carbohydrate kinase PfkB family. The protein in the C-terminal section; belongs to the cytidylyltransferase family. As to quaternary structure, homodimer.

It carries out the reaction D-glycero-beta-D-manno-heptose 7-phosphate + ATP = D-glycero-beta-D-manno-heptose 1,7-bisphosphate + ADP + H(+). It catalyses the reaction D-glycero-beta-D-manno-heptose 1-phosphate + ATP + H(+) = ADP-D-glycero-beta-D-manno-heptose + diphosphate. It participates in nucleotide-sugar biosynthesis; ADP-L-glycero-beta-D-manno-heptose biosynthesis; ADP-L-glycero-beta-D-manno-heptose from D-glycero-beta-D-manno-heptose 7-phosphate: step 1/4. The protein operates within nucleotide-sugar biosynthesis; ADP-L-glycero-beta-D-manno-heptose biosynthesis; ADP-L-glycero-beta-D-manno-heptose from D-glycero-beta-D-manno-heptose 7-phosphate: step 3/4. Catalyzes the phosphorylation of D-glycero-D-manno-heptose 7-phosphate at the C-1 position to selectively form D-glycero-beta-D-manno-heptose-1,7-bisphosphate. In terms of biological role, catalyzes the ADP transfer from ATP to D-glycero-beta-D-manno-heptose 1-phosphate, yielding ADP-D-glycero-beta-D-manno-heptose. In Enterobacter sp. (strain 638), this protein is Bifunctional protein HldE.